Reading from the N-terminus, the 156-residue chain is Protein E6 (156 aa).

Zinc fingers lie at residues 40 to 76 (CNFC…CRLC) and 113 to 149 (CHTC…CRQC).

This sequence belongs to the papillomaviridae E6 protein family. As to quaternary structure, forms homodimers. Interacts with ubiquitin-protein ligase UBE3A/E6-AP; this interaction stimulates UBE3A ubiquitin activity. Interacts with host BAK1.

Its subcellular location is the host cytoplasm. The protein localises to the host nucleus. Its function is as follows. Plays a major role in the induction and maintenance of cellular transformation. E6 associates with host UBE3A/E6-AP ubiquitin-protein ligase and modulates its activity. Protects host keratinocytes from apoptosis by mediating the degradation of host BAK1. May also inhibit host immune response. The polypeptide is Protein E6 (Homo sapiens (Human)).